Consider the following 290-residue polypeptide: Membrane protein insertase YidC 2 (290 aa).

The first 19 residues, 1–19, serve as a signal peptide directing secretion; sequence MKKKALLPLFLGIMIFLAG. Cys-20 is lipidated: N-palmitoyl cysteine. A lipid anchor (S-diacylglycerol cysteine) is attached at Cys-20. Transmembrane regions (helical) follow at residues 56 to 76, 134 to 154, 176 to 196, 211 to 231, and 232 to 252; these read FGLA…PFML, MLGC…YFVL, PDIW…VVSS, MVIS…ALGL, and YWSV…IYYS. The tract at residues 266-290 is disordered; that stretch reads YEREHNPSSKKKGKNTQVVSKKNKK. The span at 280–290 shows a compositional bias: polar residues; that stretch reads NTQVVSKKNKK.

It belongs to the OXA1/ALB3/YidC family. Type 2 subfamily.

The protein resides in the cell membrane. In terms of biological role, required for the insertion and/or proper folding and/or complex formation of integral membrane proteins into the membrane. Involved in integration of membrane proteins that insert both dependently and independently of the Sec translocase complex, as well as at least some lipoproteins. The protein is Membrane protein insertase YidC 2 of Staphylococcus epidermidis (strain ATCC 35984 / DSM 28319 / BCRC 17069 / CCUG 31568 / BM 3577 / RP62A).